The sequence spans 532 residues: KICSTOR complex protein ITFG2 (532 aa).

An FG-GAP 1; atypical repeat occupies 19–48 (FPHAICLGDVDNDTLNELVVGDTSGKLSVY). The residue at position 104 (Ser-104) is a Phosphoserine. The stretch at 126–155 (NTKVMLISDIDGDGRCELVVGYTDRVVRAF) is one FG-GAP 2; atypical repeat. The segment at 248 to 271 (PHPQQERLHSPHRQHQASHSPDSS) is disordered.

As to quaternary structure, part of the KICSTOR complex composed of KPTN, ITFG2, KICS2 and SZT2. SZT2 probably serves as a link between the other three proteins in the KICSTOR complex and may mediate the direct interaction with the GATOR complex via GATOR1. The KICSTOR complex interacts directly with the GATOR1 complex and most probably indirectly with the GATOR2 complex in an amino acid-independent manner.

The protein localises to the lysosome membrane. As part of the KICSTOR complex functions in the amino acid-sensing branch of the TORC1 signaling pathway. Recruits, in an amino acid-independent manner, the GATOR1 complex to the lysosomal membranes and allows its interaction with GATOR2 and the RAG GTPases. Functions upstream of the RAG GTPases and is required to negatively regulate mTORC1 signaling in absence of amino acids. In absence of the KICSTOR complex mTORC1 is constitutively localized to the lysosome and activated. The KICSTOR complex is also probably involved in the regulation of mTORC1 by glucose. The protein is KICSTOR complex protein ITFG2 of Bos taurus (Bovine).